We begin with the raw amino-acid sequence, 547 residues long: MDPIELRSVNIEPYEDSCSVDSIQSCYTGMGNSEKGAMDSQFANEDAESQKFLTNGFLGKKTLTDYADEHHPGTTSFGMSSFNLSNAIMGSGILGLSYAMANTGIVLFVIMLLTVAILSLYSVHLLLKTAKEGGSLIYEKLGEKAFGWPGKIGAFISITMQNIGAMSSYLFIIKYELPEVIRVFMGLEENTGEWYLNGNYLVLFVSVGIILPLSLLKNLGYLGYTSGFSLTCMVFFVSVVIYKKFQIPCPLPVLDHNNGNLTFNNTLPMHVIMLPNNSESTGMNFMVDYTHRDPEGLDEKPAAGPLHGSGVEYEAHSGDKCQPKYFVFNSRTAYAIPILAFAFVCHPEVLPIYSELKDRSRRKMQTVSNISITGMLVMYLLAALFGYLSFYGEVEDELLHAYSKVYTFDTALLMVRLAVLVAVTLTVPIVLFPIRTSVITLLFPRRPFSWVKHFGIAAIIIALNNVLVILVPTIKYIFGFIGASSATMLIFILPAAFYLKLVKKEPLRSPQKIGALVFLVTGIIFMMGSMALIIIDWIYNPPNPDHH.

Residues 1–104 (MDPIELRSVN…GLSYAMANTG (104 aa)) are Extracellular-facing. The residue at position 49 (serine 49) is a Phosphoserine. Residues 105–125 (IVLFVIMLLTVAILSLYSVHL) traverse the membrane as a helical segment. Topologically, residues 126–151 (LLKTAKEGGSLIYEKLGEKAFGWPGK) are cytoplasmic. The helical transmembrane segment at 152 to 172 (IGAFISITMQNIGAMSSYLFI) threads the bilayer. The Extracellular portion of the chain corresponds to 173 to 195 (IKYELPEVIRVFMGLEENTGEWY). The chain crosses the membrane as a helical span at residues 196–216 (LNGNYLVLFVSVGIILPLSLL). Over 217-220 (KNLG) the chain is Cytoplasmic. A helical transmembrane segment spans residues 221–241 (YLGYTSGFSLTCMVFFVSVVI). At 242–332 (YKKFQIPCPL…PKYFVFNSRT (91 aa)) the chain is on the extracellular side. A disulfide bond links cysteine 249 and cysteine 321. 3 N-linked (GlcNAc...) asparagine glycosylation sites follow: asparagine 260, asparagine 264, and asparagine 276. Residues 333–353 (AYAIPILAFAFVCHPEVLPIY) form a helical membrane-spanning segment. The Cytoplasmic segment spans residues 354 to 369 (SELKDRSRRKMQTVSN). The helical transmembrane segment at 370–390 (ISITGMLVMYLLAALFGYLSF) threads the bilayer. Residues 391–411 (YGEVEDELLHAYSKVYTFDTA) lie on the Extracellular side of the membrane. Residues 412 to 432 (LLMVRLAVLVAVTLTVPIVLF) form a helical membrane-spanning segment. Residues 433–453 (PIRTSVITLLFPRRPFSWVKH) are Cytoplasmic-facing. Residues 454-474 (FGIAAIIIALNNVLVILVPTI) form a helical membrane-spanning segment. Over 475–476 (KY) the chain is Extracellular. A helical transmembrane segment spans residues 477–497 (IFGFIGASSATMLIFILPAAF). The Cytoplasmic segment spans residues 498–514 (YLKLVKKEPLRSPQKIG). The helical transmembrane segment at 515 to 535 (ALVFLVTGIIFMMGSMALIII) threads the bilayer. The Extracellular portion of the chain corresponds to 536–547 (DWIYNPPNPDHH).

The protein belongs to the amino acid/polyamine transporter 2 family. Post-translationally, the disulfide bond plays an important role in substrate transport, but has no effect on trafficking to the cell surface. As to expression, expressed predominantly in liver, and at lower level in skeletal muscle.

It is found in the cell membrane. It localises to the cell projection. The protein resides in the microvillus membrane. The enzyme catalyses L-alanine(in) + Na(+)(in) = L-alanine(out) + Na(+)(out). The catalysed reaction is L-serine(in) + Na(+)(in) = L-serine(out) + Na(+)(out). It carries out the reaction glycine(in) + Na(+)(in) = glycine(out) + Na(+)(out). It catalyses the reaction L-cysteine(in) + Na(+)(in) = L-cysteine(out) + Na(+)(out). The enzyme catalyses L-asparagine(in) + Na(+)(in) = L-asparagine(out) + Na(+)(out). The catalysed reaction is L-threonine(in) + Na(+)(in) = L-threonine(out) + Na(+)(out). It carries out the reaction L-proline(in) + Na(+)(in) = L-proline(out) + Na(+)(out). It catalyses the reaction L-methionine(in) + Na(+)(in) = L-methionine(out) + Na(+)(out). The enzyme catalyses L-glutamine(in) + Na(+)(in) = L-glutamine(out) + Na(+)(out). The catalysed reaction is L-histidine(in) + Na(+)(in) = L-histidine(out) + Na(+)(out). Functionally, symporter that cotransports neutral amino acids and sodium ions from the extraccellular to the intracellular side of the cell membrane. The transport is electrogenic, pH dependent and partially tolerates substitution of Na(+) by Li(+). Preferentially transports smaller amino acids, such as glycine, L-alanine, L-serine, L-asparagine and L-threonine, followed by L-cysteine, L-histidine, L-proline and L-glutamine and L-methionine. This is Sodium-coupled neutral amino acid transporter 4 from Rattus norvegicus (Rat).